The primary structure comprises 293 residues: Protein YIF1A (293 aa).

The interval 1-33 is disordered; sequence MAYHSGYGAHGSKHRARAAPDPPPLFDDTSGGY. Alanine 2 bears the N-acetylalanine mark. At 2–138 the chain is on the cytoplasmic side; the sequence is AYHSGYGAHG…PPRQDLNAPD (137 aa). Position 12 is a phosphoserine (serine 12). A helical transmembrane segment spans residues 139-159; the sequence is LYIPTMAFITYVLLAGMALGI. The Lumenal portion of the chain corresponds to 160-174; the sequence is QKRFSPEVLGLCAST. Residues 175–195 form a helical membrane-spanning segment; that stretch reads ALVWVVMEVLALLLGLYLATV. Over 196 to 203 the chain is Cytoplasmic; it reads RSDLSTFH. A helical membrane pass occupies residues 204 to 226; sequence LLAYSGYKYVGMILSVLTGLLFG. Over 227-229 the chain is Lumenal; the sequence is SDG. Residues 230–249 traverse the membrane as a helical segment; sequence YYVALAWTSSALMYFIVRSL. Topologically, residues 250–271 are cytoplasmic; it reads RTAALGPDSMGGPVPRQRLQLY. A helical transmembrane segment spans residues 272–292; the sequence is LTLGAAAFQPLIIYWLTFHLV.

This sequence belongs to the YIF1 family. Interacts with YIPF5.

It is found in the endoplasmic reticulum membrane. The protein resides in the golgi apparatus membrane. The protein localises to the endoplasmic reticulum-Golgi intermediate compartment membrane. Possible role in transport between endoplasmic reticulum and Golgi. The chain is Protein YIF1A (YIF1A) from Homo sapiens (Human).